Consider the following 204-residue polypeptide: Elongation factor Ts (204 aa).

The involved in Mg(2+) ion dislocation from EF-Tu stretch occupies residues 80 to 83 (TDFV).

It belongs to the EF-Ts family.

Its subcellular location is the cytoplasm. Its function is as follows. Associates with the EF-Tu.GDP complex and induces the exchange of GDP to GTP. It remains bound to the aminoacyl-tRNA.EF-Tu.GTP complex up to the GTP hydrolysis stage on the ribosome. The chain is Elongation factor Ts from Caldicellulosiruptor saccharolyticus (strain ATCC 43494 / DSM 8903 / Tp8T 6331).